Here is a 130-residue protein sequence, read N- to C-terminus: Probable 4-amino-4-deoxy-L-arabinose-phosphoundecaprenol flippase subunit ArnF (130 aa).

At 1–4 the chain is on the cytoplasmic side; the sequence is MGYG. The helical transmembrane segment at 5–25 threads the bilayer; sequence WALFSVALVSAAQLLLKWVMM. Topologically, residues 26–44 are periplasmic; sequence HLPPLGALRLWLDPAYAEP. Residues 45–65 traverse the membrane as a helical segment; the sequence is LALLMGGLLAYVCSMGCWFMA. The Cytoplasmic portion of the chain corresponds to 66-74; the sequence is LRRLPLNKA. A helical membrane pass occupies residues 75–95; it reads YPLLSLSYVLVAACALMIPEF. Residues 96-103 lie on the Periplasmic side of the membrane; sequence NERFTFSR. A helical membrane pass occupies residues 104 to 124; it reads LMGVALICGGLLLICLPAGGK. Residues 125 to 130 are Cytoplasmic-facing; sequence GDTPRR.

Belongs to the ArnF family. As to quaternary structure, heterodimer of ArnE and ArnF.

The protein localises to the cell inner membrane. The protein operates within bacterial outer membrane biogenesis; lipopolysaccharide biosynthesis. In terms of biological role, translocates 4-amino-4-deoxy-L-arabinose-phosphoundecaprenol (alpha-L-Ara4N-phosphoundecaprenol) from the cytoplasmic to the periplasmic side of the inner membrane. This chain is Probable 4-amino-4-deoxy-L-arabinose-phosphoundecaprenol flippase subunit ArnF, found in Sodalis glossinidius (strain morsitans).